The chain runs to 120 residues: Large ribosomal subunit protein bL19 (120 aa).

Belongs to the bacterial ribosomal protein bL19 family.

In terms of biological role, this protein is located at the 30S-50S ribosomal subunit interface and may play a role in the structure and function of the aminoacyl-tRNA binding site. In Dichelobacter nodosus (strain VCS1703A), this protein is Large ribosomal subunit protein bL19.